The primary structure comprises 124 residues: CBS domain-containing protein MJ0729 (124 aa).

2 CBS domains span residues 10-67 and 70-124; these read MNKD…IEDL and LIDE…YKNR.

As to quaternary structure, exhibits a pH-dependent oligomerization state: at pH 7, the dominant species is a dimer, where each monomer is a two-CBS domain protein, and at pH 4.5-4.8, the dominant species is a tetramer, with an oblong shape. At pH 2.5, there is formation of intermolecular hydrogen bonds, suggesting the presence of high-molecular weight species. The physiological dimeric species is thermal and chemically very stable.

The polypeptide is CBS domain-containing protein MJ0729 (Methanocaldococcus jannaschii (strain ATCC 43067 / DSM 2661 / JAL-1 / JCM 10045 / NBRC 100440) (Methanococcus jannaschii)).